The sequence spans 225 residues: Jeltraxin (225 aa).

A signal peptide spans 1-19 (MKGLVIFFCLFYGCHVAGA). Positions 21-223 (GKTIMLFPQK…IVVLRNQFIP (203 aa)) constitute a Pentraxin (PTX) domain. Cysteine 51 and cysteine 112 are oxidised to a cystine. Residues aspartate 75 and asparagine 76 each coordinate Ca(2+). Asparagine 87 carries an N-linked (GlcNAc...) asparagine glycan. Positions 153, 154, 155, and 165 each coordinate Ca(2+). An N-linked (GlcNAc...) asparagine glycan is attached at asparagine 207.

Homodecamer consisting of two homopentamer units. Pentraxin (or pentaxin) have a discoid arrangement of 5 non-covalently bound subunits. Ca(2+) is required as a cofactor. Glycosylated. In terms of tissue distribution, oviduct. Highest expression levels were detected in the pars convoluta with lower levels detected in the pars recta. No expression was detected in the pars uterina.

The protein localises to the secreted. Its function is as follows. Calcium-dependent beta-galactose specific lectin. This chain is Jeltraxin, found in Lepidobatrachus laevis (Budgett's frog).